Consider the following 510-residue polypeptide: Cytochrome P450 705A20 (510 aa).

A helical transmembrane segment spans residues 7 to 27 (QHCFSFILLCFFSLLCYSLLF).

It belongs to the cytochrome P450 family. The cofactor is heme.

It localises to the membrane. The chain is Cytochrome P450 705A20 (CYP705A20) from Arabidopsis thaliana (Mouse-ear cress).